The primary structure comprises 337 residues: DNA-directed RNA polymerase subunit alpha (337 aa).

Residues 1–231 are alpha N-terminal domain (alpha-NTD); the sequence is MRNITISAYT…KQLSVFDKIT (231 aa). Residues 248–337 form an alpha C-terminal domain (alpha-CTD) region; the sequence is NTKLLQNITD…IAELKAQNEG (90 aa).

It belongs to the RNA polymerase alpha chain family. In terms of assembly, homodimer. The RNAP catalytic core consists of 2 alpha, 1 beta, 1 beta' and 1 omega subunit. When a sigma factor is associated with the core the holoenzyme is formed, which can initiate transcription.

The catalysed reaction is RNA(n) + a ribonucleoside 5'-triphosphate = RNA(n+1) + diphosphate. Its function is as follows. DNA-dependent RNA polymerase catalyzes the transcription of DNA into RNA using the four ribonucleoside triphosphates as substrates. The sequence is that of DNA-directed RNA polymerase subunit alpha from Campylobacter jejuni subsp. doylei (strain ATCC BAA-1458 / RM4099 / 269.97).